Here is a 410-residue protein sequence, read N- to C-terminus: MNQQLNNLTLPIYMDYQATTPLDPRVMEAMLPYFTTKFGNPHSRSHSFGWEAERAVEEARSRVARLIGADTKEIIFTSGATESNNLAIKGVAKFYGNKKNHIITVVSEHKCVLDACRYLEQEGINITYLPVKPNGIIALETLKNAITDQTMLVSVMAVNNEIGVVQPLKEIGKICRARGVFFHSDIAQGFGKIPIDVNEFNIDLASISGHKIYGPKGIGGLYVRKKPRVRVTPLINGGGQERGMRSGTLPTPLIVGLGVAAEIAYSEMEKDTKHVNYLFDRFLNNIHSRISEVYLNGAKDPRYKGNLNLSFAGVEGESIILAIKDLAVSSGSACTSASLEPSYVLRSMGIGEELAHTSIRFGIGRFTTEQEIDYAVNLICSKIDKLRKLSPLWEMMQEGIDLKKIKWAVH.

Pyridoxal 5'-phosphate contacts are provided by residues 80–81 (AT), asparagine 160, glutamine 188, and 208–210 (SGH). Lysine 211 is modified (N6-(pyridoxal phosphate)lysine). Threonine 248 lines the pyridoxal 5'-phosphate pocket. The active-site Cysteine persulfide intermediate is the cysteine 334. Residue cysteine 334 participates in [2Fe-2S] cluster binding.

Belongs to the class-V pyridoxal-phosphate-dependent aminotransferase family. NifS/IscS subfamily. In terms of assembly, homodimer. Forms a heterotetramer with IscU, interacts with other sulfur acceptors. It depends on pyridoxal 5'-phosphate as a cofactor.

The protein localises to the cytoplasm. The enzyme catalyses (sulfur carrier)-H + L-cysteine = (sulfur carrier)-SH + L-alanine. Its pathway is cofactor biosynthesis; iron-sulfur cluster biosynthesis. Its function is as follows. Master enzyme that delivers sulfur to a number of partners involved in Fe-S cluster assembly, tRNA modification or cofactor biosynthesis. Catalyzes the removal of elemental sulfur atoms from cysteine to produce alanine. Functions as a sulfur delivery protein for Fe-S cluster synthesis onto IscU, an Fe-S scaffold assembly protein, as well as other S acceptor proteins. This Rickettsia akari (strain Hartford) protein is Cysteine desulfurase IscS.